We begin with the raw amino-acid sequence, 1188 residues long: DNA-directed RNA polymerase II subunit 2 (1188 aa).

Aspartate 800 is a binding site for Mg(2+). Disordered regions lie at residues 852 to 871 (SYDK…VSGE) and 877 to 897 (KTTP…TRRD). Over residues 879 to 892 (TPISQDEAQGQSSR) the composition is skewed to polar residues. 4 residues coordinate Zn(2+): cysteine 1124, cysteine 1127, cysteine 1142, and cysteine 1145. The C4-type zinc-finger motif lies at 1124 to 1145 (CEVCGLIAIANLKKNSFECRGC).

Belongs to the RNA polymerase beta chain family. As to quaternary structure, component of the RNA polymerase II complex consisting of at least 12 subunits.

The protein resides in the nucleus. The catalysed reaction is RNA(n) + a ribonucleoside 5'-triphosphate = RNA(n+1) + diphosphate. Functionally, DNA-dependent RNA polymerase catalyzes the transcription of DNA into RNA using the four ribonucleoside triphosphates as substrates. Second largest component of RNA polymerase II which synthesizes mRNA precursors and many functional non-coding RNAs. Proposed to contribute to the polymerase catalytic activity and forms the polymerase active center together with the largest subunit. Pol II is the central component of the basal RNA polymerase II transcription machinery. It is composed of mobile elements that move relative to each other. NRPB2 is part of the core element with the central large cleft, the clamp element that moves to open and close the cleft and the jaws that are thought to grab the incoming DNA template. In terms of biological role, essential for the completion of the three rounds of mitosis in female megaspores required for the development of mature gametophytes. This is DNA-directed RNA polymerase II subunit 2 (NRPB2) from Arabidopsis thaliana (Mouse-ear cress).